A 509-amino-acid chain; its full sequence is MDIRAAEISAILKDQIKNFGNEAEVSEVGQVLSVGDGIARVYGLDNVQAGEMVEFPGGIRGMALNLEADNVGVVIFGSDRSIKEGDTVKRTGAIVDVPVGPELLGRVVDALGNPIDGKGPINAAKRSRVDVKAPGIIPRKSVHEPMSTGLKAIDALIPVGRGQRELVIGDRQTGKTAIILDTILNQKAIHDNGPDGDKLYCVYVAIGQKRSTVAQFVKVLEERGALQYSIIVAATASDPAPMQYLAPFAGCAMGEYFRDNGKHALIGYDDLSKQAVAYRQMSLLLRRPPGREAYPGDVFYLHSRLLERAAKLSDEMGAGSLTALPVIETQGNDVSAFIPTNVISITDGQIFLETDLFYQGIRPAVNVGLSVSRVGSAAQIKAMKQVAGSIKGELAQYREMAAFAQFGSDLDASTQRLLNRGARLTELLKQPQFSPLKTEEQVAVIFAGVNGYLDKIPVAQVGKFEQGFLSYLRSEGKAILDTIRTEKAISDDTKGKLKGALDNFAKSFS.

An ATP-binding site is contributed by 169-176 (GDRQTGKT).

The protein belongs to the ATPase alpha/beta chains family. F-type ATPases have 2 components, CF(1) - the catalytic core - and CF(0) - the membrane proton channel. CF(1) has five subunits: alpha(3), beta(3), gamma(1), delta(1), epsilon(1). CF(0) has three main subunits: a(1), b(2) and c(9-12). The alpha and beta chains form an alternating ring which encloses part of the gamma chain. CF(1) is attached to CF(0) by a central stalk formed by the gamma and epsilon chains, while a peripheral stalk is formed by the delta and b chains.

The protein localises to the cell inner membrane. It catalyses the reaction ATP + H2O + 4 H(+)(in) = ADP + phosphate + 5 H(+)(out). In terms of biological role, produces ATP from ADP in the presence of a proton gradient across the membrane. The alpha chain is a regulatory subunit. This chain is ATP synthase subunit alpha, found in Agrobacterium fabrum (strain C58 / ATCC 33970) (Agrobacterium tumefaciens (strain C58)).